A 412-amino-acid polypeptide reads, in one-letter code: MEVDHADRDGARRRCREYLLALEEERRKIQVFQRELPLCFDLVTQTIEGMRSQMDAAGSEETVSDQGPPPVLEEFIPLKPSLSLSSSEEESTHADAAKSGKKEEAETSERHSSPPPPPPEAKKVTPDWLQSVQLWSQEEPQQPSSPSPTPTKDLPCKPVALNARKAGGAFQPFEKEKRAELPASSTTAAASSTVVGDSGDKPTDDDTEKHMETDKDNDKDAKDKDKEGQSQPHRKPRRCWAPELHRRFLQALQQLGGSHVATPKQIRELMKVDGLTNDEVKSHLQKYRLHTRRPSSTGQSSAAAGVPAPPAPQFVVVGSIWVPPPEYAAAAAAQQHVQLAAAGNNASGSANPVYAPVAMLPAGLQPHSHRKQHQQQQQGQRHSGSEGRRSGDAGDGSSSSPAVSSSSQTTSA.

Disordered regions lie at residues 54–241 (MDAA…RCWA), 286–310 (KYRL…PAPP), and 358–412 (AMLP…TTSA). Residues 90–112 (ESTHADAAKSGKKEEAETSERHS) show a composition bias toward basic and acidic residues. Low complexity predominate over residues 183 to 193 (ASSTTAAASST). The segment covering 198–228 (SGDKPTDDDTEKHMETDKDNDKDAKDKDKEG) has biased composition (basic and acidic residues). The region spanning 232 to 292 (PHRKPRRCWA…HLQKYRLHTR (61 aa)) is the HTH myb-type domain. Residues 263–288 (PKQIRELMKVDGLTNDEVKSHLQKYR) constitute a DNA-binding region (H-T-H motif). Residues 383–392 (SGSEGRRSGD) are compositionally biased toward basic and acidic residues. The segment covering 395 to 412 (DGSSSSPAVSSSSQTTSA) has biased composition (low complexity).

The protein resides in the nucleus. Its function is as follows. Transcriptional repressor that may play a role in response to nitrogen. May be involved in a time-dependent signaling for transcriptional regulation of nitrate-responsive genes. Binds specifically to the DNA sequence motif 5'-GAATC-3' or 5'-GAATATTC-3'. Represses the activity of its own promoter trough binding to these motifs. The protein is Transcription factor NIGT1 of Oryza sativa subsp. japonica (Rice).